Consider the following 177-residue polypeptide: tRNA (cytidine(56)-2'-O)-methyltransferase (177 aa).

S-adenosyl-L-methionine-binding positions include L83 and 108–112; that span reads GAEKV.

This sequence belongs to the aTrm56 family. Homodimer.

It localises to the cytoplasm. It catalyses the reaction cytidine(56) in tRNA + S-adenosyl-L-methionine = 2'-O-methylcytidine(56) in tRNA + S-adenosyl-L-homocysteine + H(+). Specifically catalyzes the AdoMet-dependent 2'-O-ribose methylation of cytidine at position 56 in tRNAs. In Nitrosopumilus maritimus (strain SCM1), this protein is tRNA (cytidine(56)-2'-O)-methyltransferase.